The chain runs to 229 residues: 7-cyano-7-deazaguanine synthase (229 aa).

15–25 (LSGGLDSTTCL) provides a ligand contact to ATP. Residues C192, C202, C205, and C208 each contribute to the Zn(2+) site.

It belongs to the QueC family. Zn(2+) serves as cofactor.

The enzyme catalyses 7-carboxy-7-deazaguanine + NH4(+) + ATP = 7-cyano-7-deazaguanine + ADP + phosphate + H2O + H(+). It participates in purine metabolism; 7-cyano-7-deazaguanine biosynthesis. In terms of biological role, catalyzes the ATP-dependent conversion of 7-carboxy-7-deazaguanine (CDG) to 7-cyano-7-deazaguanine (preQ(0)). The sequence is that of 7-cyano-7-deazaguanine synthase from Acinetobacter baylyi (strain ATCC 33305 / BD413 / ADP1).